The following is an 856-amino-acid chain: Increased rDNA silencing protein 4 (856 aa).

3 disordered regions span residues 1–204 (MSAS…EPKS), 230–563 (KQEE…PTPE), and 589–672 (TSLE…DEDL). Low complexity-rich tracts occupy residues 12-42 (GPASPTSSSTGASTNPATSGLAAALKGATLA), 67-84 (VPTPGTGSVSTSTSRTVG), and 111-130 (SRVVTSTPSSSSSVGSAGRT). Positions 152–162 (HVEERANDHAP) are enriched in basic and acidic residues. The span at 194–204 (ASAKPSSEPKS) shows a compositional bias: low complexity. Residues 239–254 (KKKKKKKPRPASKTQH) show a composition bias toward basic residues. Polar residues-rich tracts occupy residues 255–275 (HQTLTSPSPTPSEGLSIENQC) and 303–315 (SLSTVESIKSSTG). A compositionally biased stretch (basic and acidic residues) spans 329–347 (GETRNRNGDVRDKPSREGG). Polar residues-rich tracts occupy residues 396–410 (PVSQHAQISETTIIS), 451–468 (RVVSPSVDQSQTIRQSAE), and 478–488 (RNSTSSDETFV). Residues 503 to 514 (KELERVRPRLDR) show a composition bias toward basic and acidic residues. Residues 517 to 535 (TSTSSRASRVSTPASVRSP) are compositionally biased toward low complexity. Residues 603-620 (RRGHRHHHLPHPHLRHRT) show a composition bias toward basic residues. A compositionally biased stretch (polar residues) spans 644–654 (PSRQTEHTQPA). Residues 743–832 (DSLGQVDLSR…EGVWESAMDR (90 aa)) form the EH domain.

The protein belongs to the IRS4 family.

In terms of biological role, positive regulator of phosphatidylinositol 4,5-bisphosphate turnover and negatively regulates signaling through the cell integrity pathway. Involved in rDNA silencing. This chain is Increased rDNA silencing protein 4 (irs-4), found in Neurospora crassa (strain ATCC 24698 / 74-OR23-1A / CBS 708.71 / DSM 1257 / FGSC 987).